The following is a 132-amino-acid chain: Minor structural pilin EpdB (132 aa).

Residues 1 to 4 (MSKG) constitute a propeptide that is removed on maturation. The short motif at 9 to 19 (EFIVLFLALLV) is the QXSXEXXXL element.

The N-terminus is probably cleaved by the prepilin peptidase EppA, which recognizes the class III signal sequence.

Its subcellular location is the secreted. It is found in the cell surface. The protein localises to the fimbrium. Minor component of the type IV-like pili. Essential for pili formation. This Methanococcus maripaludis (strain DSM 14266 / JCM 13030 / NBRC 101832 / S2 / LL) protein is Minor structural pilin EpdB.